The following is a 455-amino-acid chain: Post-transcriptional regulator MTA (455 aa).

The segment at aspartate 17–aspartate 163 is disordered. A compositionally biased stretch (acidic residues) spans glutamate 23–leucine 42. Low complexity predominate over residues serine 88–proline 98. 3 consecutive short sequence motifs (nuclear localization signal) follow at residues arginine 101 to lysine 107, lysine 121 to arginine 130, and arginine 143 to arginine 152. The Zn(2+) site is built by cysteine 333, histidine 423, cysteine 427, and cysteine 432. Residues cysteine 333–cysteine 432 form a CHC2-type zinc finger.

This sequence belongs to the HHV-1 ICP27 protein family. As to quaternary structure, homodimer. Homodimerization is required for transactivation. Interacts with host ALYREF. Associates in a complex with RNA, and host export factors NXF1/TAP and ALYREF; these interactions allow nuclear export of viral transcripts. Interacts with protein K-bZIP/K8; this interaction promotes viral gene expression during lytic infection. Interacts with host PABPC1. Interacts with host AGO2 and TNRC6A; these interactions inhibit host P-body formation. Interacts with PRKRA and EIF2AK2/PKR; these interactions inhibit host stress granule formation. Post-translationally, proteolytically cleaved by host caspase-7 (CASP7), leading to its inactivation, thereby preventing expression of viral lytic genes.

It is found in the host cytoplasm. Its subcellular location is the host nucleus. In terms of biological role, post-transcriptional regulator that plays an essential role in the expression of viral lytic genes and productive viral replication. Possesses numerous activities that promote the expression of viral genes including enhancement of RNA stability, promotion of RNA splicing and stimulation of protein translation often via its ability to interact with different cellular cofactors. Stabilizes polyadenylated nuclear (PAN) RNA by cooperative binding to a 9-nt core of the MRE (MTA responsive element) together with host PABPC1. Functions as a viral splicing factor and promotes expression of intron-containing viral lytic genes. Protects viral transcripts from specific nuclear RNA decay pathways by preventing host MTREX recruitment that promotes unwinding and degradation of structured RNA substrates. Plays a role in the inhibition of host P-body formation by altering the scaffolding activity of TNRC6A at the initial stage thereby enhancing virus production. Also inhibits host stress granule formation by blocking autophosphorylation of EIF2AK2/PKR and its subsequent binding to dsRNA. The polypeptide is Post-transcriptional regulator MTA (Human herpesvirus 8 type P (isolate GK18) (HHV-8)).